The chain runs to 674 residues: DNA-directed RNA polymerase subunit beta' (674 aa).

The Zn(2+) site is built by C69, C71, C87, and C90. The Mg(2+) site is built by D494, D496, and D498.

It belongs to the RNA polymerase beta' chain family. RpoC1 subfamily. As to quaternary structure, in plastids the minimal PEP RNA polymerase catalytic core is composed of four subunits: alpha, beta, beta', and beta''. When a (nuclear-encoded) sigma factor is associated with the core the holoenzyme is formed, which can initiate transcription. It depends on Mg(2+) as a cofactor. Requires Zn(2+) as cofactor.

The protein resides in the plastid. It localises to the chloroplast. It catalyses the reaction RNA(n) + a ribonucleoside 5'-triphosphate = RNA(n+1) + diphosphate. In terms of biological role, DNA-dependent RNA polymerase catalyzes the transcription of DNA into RNA using the four ribonucleoside triphosphates as substrates. This Psilotum nudum (Whisk fern) protein is DNA-directed RNA polymerase subunit beta'.